Here is a 341-residue protein sequence, read N- to C-terminus: tRNA N6-adenosine threonylcarbamoyltransferase (341 aa).

The Fe cation site is built by histidine 111 and histidine 115. Substrate-binding positions include 134-138 (LVSGG), aspartate 167, glycine 180, and asparagine 276. Aspartate 304 provides a ligand contact to Fe cation.

It belongs to the KAE1 / TsaD family. Requires Fe(2+) as cofactor.

Its subcellular location is the cytoplasm. It carries out the reaction L-threonylcarbamoyladenylate + adenosine(37) in tRNA = N(6)-L-threonylcarbamoyladenosine(37) in tRNA + AMP + H(+). Its function is as follows. Required for the formation of a threonylcarbamoyl group on adenosine at position 37 (t(6)A37) in tRNAs that read codons beginning with adenine. Is involved in the transfer of the threonylcarbamoyl moiety of threonylcarbamoyl-AMP (TC-AMP) to the N6 group of A37, together with TsaE and TsaB. TsaD likely plays a direct catalytic role in this reaction. The sequence is that of tRNA N6-adenosine threonylcarbamoyltransferase from Pseudomonas fluorescens (strain ATCC BAA-477 / NRRL B-23932 / Pf-5).